The sequence spans 282 residues: ESX-1 secretion-associated protein EspG1 (282 aa).

It belongs to the EspG family. Interacts specifically with ESX-1-dependent PE/PPE proteins.

The protein localises to the cytoplasm. Functionally, part of the ESX-1 / type VII specialized secretion system (T7SS), which exports several proteins including EsxA and EsxB. Specific chaperone for cognate PE/PPE proteins, plays an important role in preventing aggregation of PE/PPE dimers. Also plays a role in DNA conjugation, in at least recipient strain. The sequence is that of ESX-1 secretion-associated protein EspG1 from Mycolicibacterium smegmatis (strain ATCC 700084 / mc(2)155) (Mycobacterium smegmatis).